We begin with the raw amino-acid sequence, 361 residues long: tRNA 2-selenouridine synthase (361 aa).

The region spanning 11-134 (LIADTPLIDV…LRQTAIQATW (124 aa)) is the Rhodanese domain. Catalysis depends on Cys94, which acts as the S-selanylcysteine intermediate.

Belongs to the SelU family. In terms of assembly, monomer.

It catalyses the reaction 5-methylaminomethyl-2-thiouridine(34) in tRNA + selenophosphate + (2E)-geranyl diphosphate + H2O + H(+) = 5-methylaminomethyl-2-selenouridine(34) in tRNA + (2E)-thiogeraniol + phosphate + diphosphate. The catalysed reaction is 5-methylaminomethyl-2-thiouridine(34) in tRNA + (2E)-geranyl diphosphate = 5-methylaminomethyl-S-(2E)-geranyl-thiouridine(34) in tRNA + diphosphate. The enzyme catalyses 5-methylaminomethyl-S-(2E)-geranyl-thiouridine(34) in tRNA + selenophosphate + H(+) = 5-methylaminomethyl-2-(Se-phospho)selenouridine(34) in tRNA + (2E)-thiogeraniol. It carries out the reaction 5-methylaminomethyl-2-(Se-phospho)selenouridine(34) in tRNA + H2O = 5-methylaminomethyl-2-selenouridine(34) in tRNA + phosphate. Its function is as follows. Involved in the post-transcriptional modification of the uridine at the wobble position (U34) of tRNA(Lys), tRNA(Glu) and tRNA(Gln). Catalyzes the conversion of 2-thiouridine (S2U-RNA) to 2-selenouridine (Se2U-RNA). Acts in a two-step process involving geranylation of 2-thiouridine (S2U) to S-geranyl-2-thiouridine (geS2U) and subsequent selenation of the latter derivative to 2-selenouridine (Se2U) in the tRNA chain. The chain is tRNA 2-selenouridine synthase from Salmonella arizonae (strain ATCC BAA-731 / CDC346-86 / RSK2980).